The primary structure comprises 107 residues: Integration host factor subunit beta (107 aa).

The tract at residues 54–107 is disordered; sequence NRRPARVGRNPKSGEKVQVPEKHVPHFKPGKELRERVDGRAGEPLKNDEPEDGQ. A compositionally biased stretch (basic and acidic residues) spans 65–101; the sequence is KSGEKVQVPEKHVPHFKPGKELRERVDGRAGEPLKND.

It belongs to the bacterial histone-like protein family. Heterodimer of an alpha and a beta chain.

In terms of biological role, this protein is one of the two subunits of integration host factor, a specific DNA-binding protein that functions in genetic recombination as well as in transcriptional and translational control. In Burkholderia thailandensis (strain ATCC 700388 / DSM 13276 / CCUG 48851 / CIP 106301 / E264), this protein is Integration host factor subunit beta.